Reading from the N-terminus, the 580-residue chain is DBIRD complex subunit ZNF326 (580 aa).

The segment at 1–124 (MDFEDDYVHS…YRNSLDSFGG (124 aa)) is mediates transcriptional activation. 12 positions are modified to phosphoserine: Ser48, Ser56, Ser63, Ser69, Ser81, Ser82, Ser91, Ser106, Ser114, Ser118, Ser121, and Ser137. A Glycyl lysine isopeptide (Lys-Gly) (interchain with G-Cter in SUMO2) cross-link involves residue Lys140. The interval 156-196 (SYSSFSSPHMKPAPVGSRGRGTPAYPESTFGSRSYDAFGGP) is disordered. Arg173 is subject to Omega-N-methylarginine. Ser212 bears the Phosphoserine mark. Arg235 is subject to Omega-N-methylarginine. The Bipartite nuclear localization signal motif lies at 238–260 (KRKMMQIFIKPGGAFIKKPKLAK). Residue Lys240 forms a Glycyl lysine isopeptide (Lys-Gly) (interchain with G-Cter in SUMO2) linkage. Lys247 carries the post-translational modification N6-acetyllysine; alternate. Lys247 participates in a covalent cross-link: Glycyl lysine isopeptide (Lys-Gly) (interchain with G-Cter in SUMO2); alternate. Glycyl lysine isopeptide (Lys-Gly) (interchain with G-Cter in SUMO2) cross-links involve residues Lys254 and Lys264. Residues 256–302 (PKLAKPMDKMNLSKSPTKTDPKNEEEEKRRIEARREKQRRRREKNSE) form a disordered region. Phosphoserine is present on Ser270. Positions 272–290 (TKTDPKNEEEEKRRIEARR) are enriched in basic and acidic residues. A C2H2 AKAP95-type 1 zinc finger spans residues 314–336 (CSFCKFRTFEEKDIELHLESSSH). Residue Lys401 forms a Glycyl lysine isopeptide (Lys-Gly) (interchain with G-Cter in SUMO2) linkage. Residues 407-430 (CSACSVYIPALHSSVQLHLKSPDH) form a C2H2 AKAP95-type 2 zinc finger. Glycyl lysine isopeptide (Lys-Gly) (interchain with G-Cter in SUMO2) cross-links involve residues Lys459 and Lys467. Residues 470–580 (NPFEIQDHPQ…ATEQCEHRQM (111 aa)) are disordered. Residues 483 to 529 (IEGDEEDEEKIDEPIEEEEEEEEEEEEEGEEAGSVEEEGDVEGEEGT) show a composition bias toward acidic residues. Residues 530 to 539 (AEAAAAGEAD) show a composition bias toward low complexity. Positions 540–562 (AVGEAEGAGEAEEAEEEEEEEGT) are enriched in acidic residues.

This sequence belongs to the AKAP95 family. As to quaternary structure, component of the DBIRD complex. Interacts with CCAR2; the interaction is direct. In terms of tissue distribution, ubiquitously expressed in adult tissues. Highly expressed in neuronal tissues such as brain and neural tube.

The protein localises to the nucleus matrix. Its function is as follows. Core component of the DBIRD complex, a multiprotein complex that acts at the interface between core mRNP particles and RNA polymerase II (RNAPII) and integrates transcript elongation with the regulation of alternative splicing: the DBIRD complex affects local transcript elongation rates and alternative splicing of a large set of exons embedded in (A + T)-rich DNA regions. May also play a role in neuronal differentiation. Able to bind DNA and activate expression in vitro. This Mus musculus (Mouse) protein is DBIRD complex subunit ZNF326 (Znf326).